Reading from the N-terminus, the 308-residue chain is Zinc-binding protein TroA (308 aa).

The signal sequence occupies residues 1–22; it reads MIRERICACVLALGMLTGFTHA. Zn(2+)-binding residues include H68, H133, H199, and D279.

This sequence belongs to the bacterial solute-binding protein 9 family. In terms of assembly, monomer.

It localises to the periplasm. Part of the ATP-binding cassette (ABC) transport system TroABC involved in zinc import. Binds zinc with high affinity and specificity and delivers it to the membrane permease for translocation into the cytoplasm. This chain is Zinc-binding protein TroA (troA), found in Treponema pallidum (strain Nichols).